Here is a 436-residue protein sequence, read N- to C-terminus: 3-ketoacyl-CoA thiolase (436 aa).

The active-site Acyl-thioester intermediate is the C99. Residues H392 and C422 each act as proton acceptor in the active site.

The protein belongs to the thiolase-like superfamily. Thiolase family. As to quaternary structure, heterotetramer of two alpha chains (FadJ) and two beta chains (FadI).

The protein localises to the cytoplasm. The catalysed reaction is an acyl-CoA + acetyl-CoA = a 3-oxoacyl-CoA + CoA. It participates in lipid metabolism; fatty acid beta-oxidation. In terms of biological role, catalyzes the final step of fatty acid oxidation in which acetyl-CoA is released and the CoA ester of a fatty acid two carbons shorter is formed. The sequence is that of 3-ketoacyl-CoA thiolase from Salmonella paratyphi C (strain RKS4594).